The primary structure comprises 302 residues: UDP-3-O-acyl-N-acetylglucosamine deacetylase (302 aa).

Zn(2+) contacts are provided by His78, His235, and Asp239. Residue His262 is the Proton donor of the active site.

It belongs to the LpxC family. Zn(2+) serves as cofactor.

It catalyses the reaction a UDP-3-O-[(3R)-3-hydroxyacyl]-N-acetyl-alpha-D-glucosamine + H2O = a UDP-3-O-[(3R)-3-hydroxyacyl]-alpha-D-glucosamine + acetate. It participates in glycolipid biosynthesis; lipid IV(A) biosynthesis; lipid IV(A) from (3R)-3-hydroxytetradecanoyl-[acyl-carrier-protein] and UDP-N-acetyl-alpha-D-glucosamine: step 2/6. In terms of biological role, catalyzes the hydrolysis of UDP-3-O-myristoyl-N-acetylglucosamine to form UDP-3-O-myristoylglucosamine and acetate, the committed step in lipid A biosynthesis. The protein is UDP-3-O-acyl-N-acetylglucosamine deacetylase of Bdellovibrio bacteriovorus (strain ATCC 15356 / DSM 50701 / NCIMB 9529 / HD100).